The sequence spans 270 residues: Hydroxyethylthiazole kinase (270 aa).

A substrate-binding site is contributed by methionine 47. ATP contacts are provided by arginine 123 and threonine 169. Glycine 196 serves as a coordination point for substrate.

It belongs to the Thz kinase family. Requires Mg(2+) as cofactor.

It catalyses the reaction 5-(2-hydroxyethyl)-4-methylthiazole + ATP = 4-methyl-5-(2-phosphooxyethyl)-thiazole + ADP + H(+). Its pathway is cofactor biosynthesis; thiamine diphosphate biosynthesis; 4-methyl-5-(2-phosphoethyl)-thiazole from 5-(2-hydroxyethyl)-4-methylthiazole: step 1/1. Functionally, catalyzes the phosphorylation of the hydroxyl group of 4-methyl-5-beta-hydroxyethylthiazole (THZ). This Roseiflexus sp. (strain RS-1) protein is Hydroxyethylthiazole kinase.